A 583-amino-acid chain; its full sequence is Bifunctional dihydrofolate reductase-thymidylate synthase (583 aa).

One can recognise a DHFR domain in the interval 9–229 (DIYAICACCK…TTLDFVIYSK (221 aa)). An NADP(+)-binding site is contributed by 36-42 (GLGNEGG). D51 lines the substrate pocket. NADP(+) is bound by residues 104 to 106 (KAS) and 125 to 128 (LSRT). Residues I165, Y171, and T186 each coordinate substrate. 166 to 173 (GGASVYKE) lines the NADP(+) pocket. Residues 298–583 (HPEYQYLNII…HDKISMDMAA (286 aa)) form a thymidylate synthase region. Position 320 (R320) interacts with dUMP. Residue C465 is part of the active site. Residues H466, 484-488 (QRSCD), N496, and 526-528 (HVY) contribute to the dUMP site.

In the N-terminal section; belongs to the dihydrofolate reductase family. It in the C-terminal section; belongs to the thymidylate synthase family. In terms of assembly, homodimer.

The catalysed reaction is (6S)-5,6,7,8-tetrahydrofolate + NADP(+) = 7,8-dihydrofolate + NADPH + H(+). It carries out the reaction dUMP + (6R)-5,10-methylene-5,6,7,8-tetrahydrofolate = 7,8-dihydrofolate + dTMP. It participates in cofactor biosynthesis; tetrahydrofolate biosynthesis; 5,6,7,8-tetrahydrofolate from 7,8-dihydrofolate: step 1/1. Bifunctional enzyme. Involved in de novo dTMP biosynthesis. Key enzyme in folate metabolism. Catalyzes an essential reaction for de novo glycine and purine synthesis, DNA precursor synthesis, and for the conversion of dUMP to dTMP. In Plasmodium chabaudi, this protein is Bifunctional dihydrofolate reductase-thymidylate synthase.